The primary structure comprises 761 residues: Proline-rich extensin-like protein EPR1 (761 aa).

The signal sequence occupies residues 1–24 (MRVPLIDFLRFLVLILSLSGASVA). The 1; degenerate repeat unit spans residues 63 to 77 (YSPPIYPPPIQKPPT). Positions 63-735 (YSPPIYPPPI…PPVQVPPTPT (673 aa)) are 40 X 17 AA approximate tandem repeats of Y-S-P-P-[IV]-[KY]-P-P-P-x(1,2)-K-P-P-T-P-T. 39 repeat units span residues 78–94 (YSPP…PTPT), 95–111 (YSPP…PTPT), 112–128 (YSPP…PTPT), 129–145 (YSPP…PTPS), 146–162 (YSPP…PTPT), 163–179 (YSPP…PTPT), 180–195 (YSPP…PTPI), 196–212 (YSPP…PTPI), 213–229 (YSPP…PTPT), 230–246 (YSPP…PTPI), 247–263 (YSPP…PTPI), 264–280 (YSPP…PTPI), 281–297 (YSPP…PTPT), 298–314 (YSPP…PTPT), 315–331 (YSPP…PTPT), 332–347 (YSPP…PTPI), 348–364 (YSPP…PTPI), 365–381 (YSPP…PTPI), 382–398 (YSPP…PTPT), 399–415 (YSPP…PTPT), 416–431 (YSPP…PTPI), 432–448 (YSPP…PTPI), 449–465 (YSPP…PTPT), 466–481 (YSPP…PTPT), 482–498 (YSPP…PTPT), 499–515 (YSPP…PTPT), 516–531 (YSPP…PTPT), 532–548 (YSPP…PTPT), 549–565 (YSPP…PTPT), 566–582 (YSPP…PTPT), 583–599 (YSPP…PTPT), 600–616 (YSPP…PTPT), 617–633 (YSPP…PTPT), 634–650 (YSPP…PTPT), 651–667 (YSPP…PTPT), 668–684 (YSPP…PTPT), 685–701 (YSPP…PTPT), 702–718 (YSPP…PTPT), and 719–735 (YSPP…PTPT). The span at 111-750 (TYSPPIYPPP…QGGYGTPPPY (640 aa)) shows a compositional bias: pro residues. The interval 111 to 761 (TYSPPIYPPP…YLSHPIDIRN (651 aa)) is disordered.

Belongs to the extensin family. In terms of tissue distribution, specifically expressed in endosperm during seed germination, at the site of radicle protrusion.

Its subcellular location is the secreted. It is found in the primary cell wall. Its function is as follows. May have a specific role in modifying the cell-wall structure, specifically during seed germination, thus facilitating radicle protrusion. The chain is Proline-rich extensin-like protein EPR1 (EPR1) from Arabidopsis thaliana (Mouse-ear cress).